Reading from the N-terminus, the 416-residue chain is D-amino acid dehydrogenase (416 aa).

3–17 (ITILGSGVIGVTTAY) is a binding site for FAD.

The protein belongs to the DadA oxidoreductase family. It depends on FAD as a cofactor.

The enzyme catalyses a D-alpha-amino acid + A + H2O = a 2-oxocarboxylate + AH2 + NH4(+). Its pathway is amino-acid degradation; D-alanine degradation; NH(3) and pyruvate from D-alanine: step 1/1. Oxidative deamination of D-amino acids. The polypeptide is D-amino acid dehydrogenase (Brucella anthropi (strain ATCC 49188 / DSM 6882 / CCUG 24695 / JCM 21032 / LMG 3331 / NBRC 15819 / NCTC 12168 / Alc 37) (Ochrobactrum anthropi)).